We begin with the raw amino-acid sequence, 1365 residues long: DNA-directed RNA polymerase subunit beta'' (1365 aa).

Cys224, Cys295, Cys302, and Cys305 together coordinate Zn(2+).

The protein belongs to the RNA polymerase beta' chain family. RpoC2 subfamily. In terms of assembly, in plastids the minimal PEP RNA polymerase catalytic core is composed of four subunits: alpha, beta, beta', and beta''. When a (nuclear-encoded) sigma factor is associated with the core the holoenzyme is formed, which can initiate transcription. The cofactor is Zn(2+).

The protein resides in the plastid. Its subcellular location is the chloroplast. It carries out the reaction RNA(n) + a ribonucleoside 5'-triphosphate = RNA(n+1) + diphosphate. Functionally, DNA-dependent RNA polymerase catalyzes the transcription of DNA into RNA using the four ribonucleoside triphosphates as substrates. The protein is DNA-directed RNA polymerase subunit beta'' of Fagopyrum esculentum subsp. ancestrale (Wild buckwheat).